Consider the following 346-residue polypeptide: Flap endonuclease 1 (346 aa).

Positions 1 to 102 (MGVTELGKLI…AEIEERRKVK (102 aa)) are N-domain. Mg(2+) contacts are provided by Asp-31, Asp-84, Glu-156, Glu-158, Asp-177, Asp-179, and Asp-239. The I-domain stretch occupies residues 120–261 (DVAKYMKRAV…KALKLVWEFG (142 aa)).

Belongs to the XPG/RAD2 endonuclease family. FEN1 subfamily. In terms of assembly, interacts with PCNA. PCNA stimulates the nuclease activity without altering cleavage specificity. Requires Mg(2+) as cofactor.

In terms of biological role, structure-specific nuclease with 5'-flap endonuclease and 5'-3' exonuclease activities involved in DNA replication and repair. During DNA replication, cleaves the 5'-overhanging flap structure that is generated by displacement synthesis when DNA polymerase encounters the 5'-end of a downstream Okazaki fragment. Binds the unpaired 3'-DNA end and kinks the DNA to facilitate 5' cleavage specificity. Cleaves one nucleotide into the double-stranded DNA from the junction in flap DNA, leaving a nick for ligation. Also involved in the base excision repair (BER) pathway. Acts as a genome stabilization factor that prevents flaps from equilibrating into structures that lead to duplications and deletions. Also possesses 5'-3' exonuclease activity on nicked or gapped double-stranded DNA. This chain is Flap endonuclease 1, found in Pyrobaculum islandicum (strain DSM 4184 / JCM 9189 / GEO3).